Reading from the N-terminus, the 132-residue chain is Global transcriptional regulator Spx (132 aa).

A disulfide bridge links cysteine 10 with cysteine 13.

The protein belongs to the ArsC family. Spx subfamily. In terms of assembly, interacts with the C-terminal domain of the alpha subunit of the RNAP.

It localises to the cytoplasm. Functionally, global transcriptional regulator that plays a key role in stress response and exerts either positive or negative regulation of genes. Acts by interacting with the C-terminal domain of the alpha subunit of the RNA polymerase (RNAP). This interaction can enhance binding of RNAP to the promoter region of target genes and stimulate their transcription, or block interaction of RNAP with activator. This chain is Global transcriptional regulator Spx, found in Enterococcus faecalis (strain ATCC 700802 / V583).